The following is a 670-amino-acid chain: DNA ligase (670 aa).

Residues 34-38 (DAEYD), 83-84 (SL), and glutamate 112 each bind NAD(+). Residue lysine 114 is the N6-AMP-lysine intermediate of the active site. Residues arginine 135, glutamate 169, lysine 285, and lysine 309 each coordinate NAD(+). Cysteine 403, cysteine 406, cysteine 421, and cysteine 426 together coordinate Zn(2+). A BRCT domain is found at 589–670 (PASSVLAGKT…FLQEISREEQ (82 aa)).

It belongs to the NAD-dependent DNA ligase family. LigA subfamily. Mg(2+) is required as a cofactor. Requires Mn(2+) as cofactor.

It carries out the reaction NAD(+) + (deoxyribonucleotide)n-3'-hydroxyl + 5'-phospho-(deoxyribonucleotide)m = (deoxyribonucleotide)n+m + AMP + beta-nicotinamide D-nucleotide.. DNA ligase that catalyzes the formation of phosphodiester linkages between 5'-phosphoryl and 3'-hydroxyl groups in double-stranded DNA using NAD as a coenzyme and as the energy source for the reaction. It is essential for DNA replication and repair of damaged DNA. In Geobacillus thermodenitrificans (strain NG80-2), this protein is DNA ligase.